Here is a 632-residue protein sequence, read N- to C-terminus: tRNA uridine 5-carboxymethylaminomethyl modification enzyme MnmG (632 aa).

An FAD-binding site is contributed by 13–18 (GGGHAG). 273-287 (GPRYCPSIEDKIHRF) is a binding site for NAD(+).

This sequence belongs to the MnmG family. As to quaternary structure, homodimer. Heterotetramer of two MnmE and two MnmG subunits. FAD is required as a cofactor.

Its subcellular location is the cytoplasm. In terms of biological role, NAD-binding protein involved in the addition of a carboxymethylaminomethyl (cmnm) group at the wobble position (U34) of certain tRNAs, forming tRNA-cmnm(5)s(2)U34. In Psychrobacter cryohalolentis (strain ATCC BAA-1226 / DSM 17306 / VKM B-2378 / K5), this protein is tRNA uridine 5-carboxymethylaminomethyl modification enzyme MnmG.